The primary structure comprises 297 residues: Formylmethanofuran--tetrahydromethanopterin formyltransferase (297 aa).

This sequence belongs to the FTR family. In terms of assembly, homotetramer.

The protein localises to the cytoplasm. The catalysed reaction is N-formylmethanofuran + 5,6,7,8-tetrahydromethanopterin + H(+) = N(5)-formyl-5,6,7,8-tetrahydromethanopterin + methanofuran. It participates in one-carbon metabolism; methanogenesis from CO(2); 5,10-methenyl-5,6,7,8-tetrahydromethanopterin from CO(2): step 2/3. Its function is as follows. Catalyzes the reversible transfer of a formyl group from formylmethanofuran (formyl-MFR) to tetrahydromethanopterin (H(4)MPT) to produce 5-formyl tetrahydromethanopterin (5-formyl-H(4)MPT) and methanofuran (MFR). The chain is Formylmethanofuran--tetrahydromethanopterin formyltransferase from Methanothermobacter thermautotrophicus (strain ATCC 29096 / DSM 1053 / JCM 10044 / NBRC 100330 / Delta H) (Methanobacterium thermoautotrophicum).